We begin with the raw amino-acid sequence, 467 residues long: Inactive pancreatic lipase-related protein 1 (467 aa).

The first 17 residues, 1–17 (MVSIWTIALFLLGAAKA), serve as a signal peptide directing secretion. 2 cysteine pairs are disulfide-bonded: Cys-21-Cys-27 and Cys-109-Cys-120. Asn-157 carries an N-linked (GlcNAc...) asparagine glycan. The Nucleophile role is filled by Ser-171. The Charge relay system role is filled by Asp-194. Residues Glu-205, Arg-208, Asp-210, and Asp-213 each contribute to the Ca(2+) site. A disulfide bond links Cys-255 and Cys-279. Residue His-281 is the Charge relay system of the active site. Cystine bridges form between Cys-303–Cys-314, Cys-317–Cys-322, and Cys-451–Cys-467. In terms of domain architecture, PLAT spans 356–467 (WRYGVSITLS…EDVLLTLTPC (112 aa)).

This sequence belongs to the AB hydrolase superfamily. Lipase family. Detected in pancreas (at protein level).

It is found in the secreted. May function as inhibitor of dietary triglyceride digestion. Lacks detectable lipase activity towards triglycerides, diglycerides, phosphatidylcholine, galactolipids or cholesterol esters (in vitro). The protein is Inactive pancreatic lipase-related protein 1 (PNLIPRP1) of Canis lupus familiaris (Dog).